Consider the following 1414-residue polypeptide: DNA-directed RNA polymerase subunit beta' (1414 aa).

Zn(2+)-binding residues include Cys-72, Cys-74, Cys-87, and Cys-90. Mg(2+) contacts are provided by Asp-463, Asp-465, and Asp-467. Residues Cys-811, Cys-885, Cys-892, and Cys-895 each coordinate Zn(2+).

This sequence belongs to the RNA polymerase beta' chain family. As to quaternary structure, the RNAP catalytic core consists of 2 alpha, 1 beta, 1 beta' and 1 omega subunit. When a sigma factor is associated with the core the holoenzyme is formed, which can initiate transcription. Mg(2+) is required as a cofactor. It depends on Zn(2+) as a cofactor.

It catalyses the reaction RNA(n) + a ribonucleoside 5'-triphosphate = RNA(n+1) + diphosphate. In terms of biological role, DNA-dependent RNA polymerase catalyzes the transcription of DNA into RNA using the four ribonucleoside triphosphates as substrates. The protein is DNA-directed RNA polymerase subunit beta' of Roseobacter denitrificans (strain ATCC 33942 / OCh 114) (Erythrobacter sp. (strain OCh 114)).